The primary structure comprises 743 residues: Serine-rich coiled-coil domain-containing protein 1 (743 aa).

Disordered stretches follow at residues 1–125 and 156–175; these read MGDS…SRNK and KSEG…SVKQ. Residues 29–56 are compositionally biased toward low complexity; sequence LPSSPSSSNTVGVHSSSPSSTNSSSGST. Polar residues predominate over residues 81–102; that stretch reads EPTNQNLSISNGAQPGQSSMQK. The stretch at 672–713 forms a coiled coil; sequence MKDECSMLKLQLKEKDELISQLQEELEKVQHLQKAFASRVDK.

Belongs to the CCSER family.

The chain is Serine-rich coiled-coil domain-containing protein 1 (CCSER1) from Bos taurus (Bovine).